The sequence spans 73 residues: Translation initiation factor IF-1 (73 aa).

The S1-like domain maps to 1–72; it reads MSKKDVIELE…SRGRIVYRKK (72 aa).

It belongs to the IF-1 family. Component of the 30S ribosomal translation pre-initiation complex which assembles on the 30S ribosome in the order IF-2 and IF-3, IF-1 and N-formylmethionyl-tRNA(fMet); mRNA recruitment can occur at any time during PIC assembly.

Its subcellular location is the cytoplasm. One of the essential components for the initiation of protein synthesis. Stabilizes the binding of IF-2 and IF-3 on the 30S subunit to which N-formylmethionyl-tRNA(fMet) subsequently binds. Helps modulate mRNA selection, yielding the 30S pre-initiation complex (PIC). Upon addition of the 50S ribosomal subunit IF-1, IF-2 and IF-3 are released leaving the mature 70S translation initiation complex. This is Translation initiation factor IF-1 from Fusobacterium nucleatum subsp. nucleatum (strain ATCC 25586 / DSM 15643 / BCRC 10681 / CIP 101130 / JCM 8532 / KCTC 2640 / LMG 13131 / VPI 4355).